Here is a 203-residue protein sequence, read N- to C-terminus: Inosine triphosphate pyrophosphatase (203 aa).

10–15 (TGNQNK) is a binding site for ITP. Position 40 (Glu40) interacts with Mg(2+). ITP contacts are provided by residues Lys52, 68–69 (DT), Lys85, 145–148 (FGWD), Lys168, and 173–174 (HR).

It belongs to the HAM1 NTPase family. Homodimer. Mg(2+) serves as cofactor. Requires Mn(2+) as cofactor.

It is found in the cytoplasm. The catalysed reaction is ITP + H2O = IMP + diphosphate + H(+). The enzyme catalyses dITP + H2O = dIMP + diphosphate + H(+). It carries out the reaction XTP + H2O = XMP + diphosphate + H(+). In terms of biological role, pyrophosphatase that hydrolyzes non-canonical purine nucleotides such as inosine triphosphate (ITP), deoxyinosine triphosphate (dITP) or xanthosine 5'-triphosphate (XTP) to their respective monophosphate derivatives. The enzyme does not distinguish between the deoxy- and ribose forms. Probably excludes non-canonical purines from RNA and DNA precursor pools, thus preventing their incorporation into RNA and DNA and avoiding chromosomal lesions. The sequence is that of Inosine triphosphate pyrophosphatase from Nematostella vectensis (Starlet sea anemone).